A 410-amino-acid chain; its full sequence is Transposase for insertion sequence element IS801 (410 aa).

The protein belongs to the transposase 32 family.

In terms of biological role, involved in the transposition of the insertion sequence. This chain is Transposase for insertion sequence element IS801, found in Pseudomonas savastanoi pv. phaseolicola (Pseudomonas syringae pv. phaseolicola).